We begin with the raw amino-acid sequence, 877 residues long: Dynamin (877 aa).

In terms of domain architecture, Dynamin-type G spans 23 to 289 (QLDLPQIAVV…LTNHIRDTLP (267 aa)). Positions 33–40 (GGQSAGKS) are G1 motif. GTP is bound at residue 33–41 (GGQSAGKSS). The segment at 59-61 (VTR) is G2 motif. Residues 131-134 (DLPG) are G3 motif. The tract at residues 200 to 203 (TKLD) is G4 motif. GTP is bound by residues 200–206 (TKLDLMD) and 231–234 (NRSQ). The interval 230-233 (VNRS) is G5 motif. One can recognise a PH domain in the interval 513–621 (QVIRKGHMVI…WKASFLRAGV (109 aa)). Disordered stretches follow at residues 623–648 (PEKQ…QLER) and 740–834 (TVSS…SGAV). Over residues 630–641 (ENGDESASEESS) the composition is skewed to acidic residues. The GED domain maps to 650-741 (VETIRNLVDS…IIGDVSMATV (92 aa)). 3 positions are modified to phosphoserine: Ser-756, Ser-764, and Ser-767. A compositionally biased stretch (pro residues) spans 788-826 (PPLPPSTGRPAPAIPNRPGGGAPPLPGGRPGGSLPPPML).

It belongs to the TRAFAC class dynamin-like GTPase superfamily. Dynamin/Fzo/YdjA family.

The protein resides in the cytoplasm. The protein localises to the cytoskeleton. It catalyses the reaction GTP + H2O = GDP + phosphate + H(+). In terms of biological role, microtubule-associated force-producing protein which is involved in the production of microtubule bundles and which is able to bind and hydrolyze GTP. Implicated in endocytic protein sorting. In Drosophila melanogaster (Fruit fly), this protein is Dynamin (shi).